Consider the following 199-residue polypeptide: Probable GTP-binding protein EngB (199 aa).

Residues D28–L199 form the EngB-type G domain. GTP-binding positions include G36–S43, G63–L67, D81–G84, T148–D151, and F180–S182. S43 and T65 together coordinate Mg(2+).

It belongs to the TRAFAC class TrmE-Era-EngA-EngB-Septin-like GTPase superfamily. EngB GTPase family. Requires Mg(2+) as cofactor.

Necessary for normal cell division and for the maintenance of normal septation. The polypeptide is Probable GTP-binding protein EngB (Streptococcus equi subsp. zooepidemicus (strain H70)).